The following is a 229-amino-acid chain: Somatolactin (229 aa).

Positions 1-21 are cleaved as a signal peptide; sequence MAALQEVLLAVLLWPVLVTIS. 3 cysteine pairs are disulfide-bonded: cysteine 26–cysteine 36, cysteine 87–cysteine 203, and cysteine 220–cysteine 228. Asparagine 143 is a glycosylation site (N-linked (GlcNAc...) asparagine).

The protein belongs to the somatotropin/prolactin family. Pituitary gland.

The protein resides in the secreted. The polypeptide is Somatolactin (Tetraodon miurus (Congo puffer)).